A 273-amino-acid polypeptide reads, in one-letter code: Acetyl-coenzyme A carboxylase carboxyl transferase subunit alpha (273 aa).

The 244-residue stretch at methionine 1 to glutamate 244 folds into the CoA carboxyltransferase C-terminal domain.

This sequence belongs to the AccA family. Acetyl-CoA carboxylase is a heterohexamer composed of biotin carboxyl carrier protein (AccB), biotin carboxylase (AccC) and two subunits each of ACCase subunit alpha (AccA) and ACCase subunit beta (AccD).

The protein resides in the cytoplasm. The catalysed reaction is N(6)-carboxybiotinyl-L-lysyl-[protein] + acetyl-CoA = N(6)-biotinyl-L-lysyl-[protein] + malonyl-CoA. Its pathway is lipid metabolism; malonyl-CoA biosynthesis; malonyl-CoA from acetyl-CoA: step 1/1. In terms of biological role, component of the acetyl coenzyme A carboxylase (ACC) complex. First, biotin carboxylase catalyzes the carboxylation of biotin on its carrier protein (BCCP) and then the CO(2) group is transferred by the carboxyltransferase to acetyl-CoA to form malonyl-CoA. The chain is Acetyl-coenzyme A carboxylase carboxyl transferase subunit alpha from Acinetobacter baumannii (strain ACICU).